Reading from the N-terminus, the 150-residue chain is Large ribosomal subunit protein bL9 (150 aa).

The protein belongs to the bacterial ribosomal protein bL9 family.

Binds to the 23S rRNA. This is Large ribosomal subunit protein bL9 from Leuconostoc citreum (strain KM20).